A 380-amino-acid chain; its full sequence is 3-dehydroquinate synthase (380 aa).

NAD(+) is bound by residues 100–104, 124–125, Lys137, and Lys146; these read GAASD and TT. Glu179, His251, and His267 together coordinate Zn(2+).

It belongs to the sugar phosphate cyclases superfamily. Dehydroquinate synthase family. NAD(+) serves as cofactor. It depends on Co(2+) as a cofactor. Requires Zn(2+) as cofactor.

Its subcellular location is the cytoplasm. It carries out the reaction 7-phospho-2-dehydro-3-deoxy-D-arabino-heptonate = 3-dehydroquinate + phosphate. The protein operates within metabolic intermediate biosynthesis; chorismate biosynthesis; chorismate from D-erythrose 4-phosphate and phosphoenolpyruvate: step 2/7. Catalyzes the conversion of 3-deoxy-D-arabino-heptulosonate 7-phosphate (DAHP) to dehydroquinate (DHQ). In Tropheryma whipplei (strain TW08/27) (Whipple's bacillus), this protein is 3-dehydroquinate synthase.